The sequence spans 834 residues: MSQTIDLTLDGLSCGHCVKRVKESLEQRPDVEQADVSITEAHVTGTASAEQLIETIKQAGYDASVSHPKAKPLAESSIPSEALTAVSEALPAATADDDDSQQLLLSGMSCASCVTRVQNALQSVPGVTQARVNLAERTALVMGSASPQDLVQAVEKAGYGAEAIEDDAKRRERQQETAVATMKRFRWQAIVALAVGIPVMVWGMIGDNMMVTADNRSLWLVIGLITLAVMVFAGGHFYRSAWKSLLNGAATMDTLVALGTGVAWLYSMSVNLWPQWFPMEARHLYYEASAMIIGLINLGHMLEARARQRSSKALEKLLDLTPPTARLVTDEGEKSVPLAEVQPGMLLRLTTGDRVPVDGEITQGEAWLDEAMLTGEPIPQQKGEGDSVHAGTVVQDGSVLFRASAVGSHTTLSRIIRMVRQAQSSKPEIGQLADKISAVFVPVVVVIALVSAAIWYFFGPAPQIVYTLVIATTVLIIACPCALGLATPMSIISGVGRAAEFGVLVRDADALQRASTLDTVVFDKTGTLTEGKPQVVAVKTFADVDEAQALRLAAALEQGSSHPLARAILDKAGDMQLPQVNGFRTLRGLGVSGEAEGHALLLGNQALLNEQQVGTKAIEAEITAQASQGATPVLLAVDGKAVALLAVRDPLRSDSVAALQRLHKAGYRLVMLTGDNPTTANAIAKEAGIDEVIAGVLPDGKAEAIKHLQSEGRQVAMVGDGINDAPALAQADVGIAMGGGSDVAIETAAITLMRHSLMGVADALAISRATLHNMKQNLLGAFIYNSIGIPVAAGILWPFTGTLLNPVVAGAAMALSSITVVSNANRLLRFKPKE.

At Ser2–Arg186 the chain is on the cytoplasmic side. 2 HMA domains span residues Gln3 to Ser64 and Asp99 to Glu162. Cys14, Cys17, Cys110, and Cys113 together coordinate Cu(+). Short sequence motifs (CXXC motif) lie at residues Cys14–Cys17 and Cys110–Cys113. The chain crosses the membrane as a helical span at residues Trp187–Asp207. Residues Asn208–Ser217 lie on the Periplasmic; loop 1 side of the membrane. A helical membrane pass occupies residues Leu218–Tyr238. Topologically, residues Arg239 to Asp253 are cytoplasmic. A helical transmembrane segment spans residues Thr254–Pro274. Over Gln275–His283 the chain is Periplasmic; loop 2. Residues Leu284–Ala304 form a helical membrane-spanning segment. Residues Arg305–Ser437 lie on the Cytoplasmic side of the membrane. The helical transmembrane segment at Ala438 to Phe458 threads the bilayer. Over Gly459–Gln463 the chain is Periplasmic; loop 3. A helical membrane pass occupies residues Ile464 to Gly484. The Cytoplasmic portion of the chain corresponds to Leu485–Leu778. The 4-aspartylphosphate intermediate role is filled by Asp523. 2 residues coordinate Mg(2+): Asp720 and Asp724. A helical membrane pass occupies residues Leu779 to Phe799. Residue Thr800 is a topological domain, periplasmic; loop 4. A helical membrane pass occupies residues Gly801–Val821. Residues Ser822–Glu834 lie on the Cytoplasmic side of the membrane.

The protein belongs to the cation transport ATPase (P-type) (TC 3.A.3) family. Type IB subfamily. As to quaternary structure, copper-exporting P-type ATPase interacts with apo-periplasmic copper chaperone CusF; when CusF is precharged with copper it binds very little CopA. The periplasmic loops of CopA, especially the first half of loop 1, play a large role in binding to CusF.

It is found in the cell inner membrane. Its subcellular location is the cytoplasm. It carries out the reaction Cu(+)(in) + ATP + H2O = Cu(+)(out) + ADP + phosphate + H(+). Export is inhibited by vanadate. Phosphorylation is inhibited by vanadate and sensitive to KOH and hydroxylamine; it is not inhibited by azide. Phosphorylation is Cu(+) not Cu(2+)-dependent. ATPase activity is inhibited by bathocuproindisulfonate (BCDS), which chelates Cu(+) but not Cu(2+), and stimulated 3-4-fold by Cu(+). ATPase activity is inhibited by Cu(2+) plus DTT or Ag(+). Functionally, exports Cu(+) from the cytoplasm to the periplasm. Binds 2 Cu(+) ions per monomer, which are transferred to periplasmic copper chaperone CusF upon ATP hydrolysis. In vitro an excess of CusF over CopA is required for efficient transfer. May also be involved in silver export. In terms of biological role, mRNA is subject to programmed ribosomal frameshifting which produces a cytoplasmic copper chaperone CopA(Z) that corresponds to the first HMA domain. The soluble form is essential for cell survivial in the presence of CuSO(4); in growth competition experiments between wild-type and a version that prevents expression of CopA(Z) after 50 generations the non-CopA(Z) version is nearly extinct. The first HMA domain (residues 1-70) can be replaced by B.subtilis Cu chaperone CopZ. The polypeptide is Copper-exporting P-type ATPase (Escherichia coli (strain K12)).